A 120-amino-acid polypeptide reads, in one-letter code: Large ribosomal subunit protein bL19 (120 aa).

The protein belongs to the bacterial ribosomal protein bL19 family.

Functionally, this protein is located at the 30S-50S ribosomal subunit interface and may play a role in the structure and function of the aminoacyl-tRNA binding site. This Acaryochloris marina (strain MBIC 11017) protein is Large ribosomal subunit protein bL19.